The chain runs to 282 residues: Pantothenate synthetase (282 aa).

30 to 37 (MGNLHEGH) serves as a coordination point for ATP. Histidine 37 serves as the catalytic Proton donor. Glutamine 61 contacts (R)-pantoate. Beta-alanine is bound at residue glutamine 61. 148 to 151 (GQKD) contacts ATP. Residue glutamine 154 participates in (R)-pantoate binding. Residues valine 177 and 185–188 (LSSR) contribute to the ATP site.

This sequence belongs to the pantothenate synthetase family. As to quaternary structure, homodimer.

The protein localises to the cytoplasm. It catalyses the reaction (R)-pantoate + beta-alanine + ATP = (R)-pantothenate + AMP + diphosphate + H(+). The protein operates within cofactor biosynthesis; (R)-pantothenate biosynthesis; (R)-pantothenate from (R)-pantoate and beta-alanine: step 1/1. In terms of biological role, catalyzes the condensation of pantoate with beta-alanine in an ATP-dependent reaction via a pantoyl-adenylate intermediate. This is Pantothenate synthetase from Acinetobacter baumannii (strain AB0057).